A 420-amino-acid polypeptide reads, in one-letter code: Protein maelstrom homolog (420 aa).

The HMG box DNA-binding region spans 4-73 (RRASRNAYYF…AQGKDSGPSE (70 aa)). 3 disordered regions span residues 62–94 (RAAQ…KQNV), 341–372 (GFSH…GQNS), and 392–420 (NIHK…SSLS). Polar residues-rich tracts occupy residues 344–358 (HFSS…NTPT) and 392–407 (NIHK…SPYT).

This sequence belongs to the maelstrom family. Interacts with SMARCB1, SIN3B and DDX4. Interacts with piRNA-associated proteins TDRD1, PIWIL1 and PIWIL2. Interacts with TEX19.

Its subcellular location is the cytoplasm. It localises to the nucleus. Plays a central role during spermatogenesis by repressing transposable elements and preventing their mobilization, which is essential for the germline integrity. Acts via the piRNA metabolic process, which mediates the repression of transposable elements during meiosis by forming complexes composed of piRNAs and Piwi proteins and governs the methylation and subsequent repression of transposons. Its association with piP-bodies suggests a participation in the secondary piRNAs metabolic process. Required for the localization of germ-cell factors to the meiotic nuage. This is Protein maelstrom homolog (MAEL) from Bos taurus (Bovine).